Reading from the N-terminus, the 172-residue chain is Shikimate kinase (172 aa).

11–16 (GCGKST) contacts ATP. Ser15 contacts Mg(2+). Residues Asp33, Arg57, and Gly80 each contribute to the substrate site. Residue Arg120 participates in ATP binding. Arg142 is a substrate binding site. Arg158 lines the ATP pocket.

Belongs to the shikimate kinase family. Monomer. Mg(2+) serves as cofactor.

It is found in the cytoplasm. The enzyme catalyses shikimate + ATP = 3-phosphoshikimate + ADP + H(+). It functions in the pathway metabolic intermediate biosynthesis; chorismate biosynthesis; chorismate from D-erythrose 4-phosphate and phosphoenolpyruvate: step 5/7. Functionally, catalyzes the specific phosphorylation of the 3-hydroxyl group of shikimic acid using ATP as a cosubstrate. In Flavobacterium johnsoniae (strain ATCC 17061 / DSM 2064 / JCM 8514 / BCRC 14874 / CCUG 350202 / NBRC 14942 / NCIMB 11054 / UW101) (Cytophaga johnsonae), this protein is Shikimate kinase.